The following is a 568-amino-acid chain: Small ribosomal subunit protein bS1 (568 aa).

S1 motif domains are found at residues 39–100, 118–184, 205–273, 290–360, 377–447, and 464–533; these read KTVV…LSRE, GEFV…VSRR, GMIL…LGIK, GKKM…LSIK, GTII…LGIK, and GTIV…LSVK.

It belongs to the bacterial ribosomal protein bS1 family.

In terms of biological role, binds mRNA; thus facilitating recognition of the initiation point. It is needed to translate mRNA with a short Shine-Dalgarno (SD) purine-rich sequence. The protein is Small ribosomal subunit protein bS1 (rpsA) of Rickettsia typhi (strain ATCC VR-144 / Wilmington).